A 589-amino-acid chain; its full sequence is Glutamine--fructose-6-phosphate aminotransferase [isomerizing] (589 aa).

Cys-2 acts as the Nucleophile; for GATase activity in catalysis. Residues 2 to 221 (CGIIGIVSLR…DDELGFITPE (220 aa)) form the Glutamine amidotransferase type-2 domain. 2 consecutive SIS domains span residues 286–426 (VIEE…KMEK) and 445–579 (IGEE…PDKP). The For Fru-6P isomerization activity role is filled by Lys-584.

In terms of assembly, homodimer.

Its subcellular location is the cytoplasm. The catalysed reaction is D-fructose 6-phosphate + L-glutamine = D-glucosamine 6-phosphate + L-glutamate. Catalyzes the first step in hexosamine metabolism, converting fructose-6P into glucosamine-6P using glutamine as a nitrogen source. In Sulfurisphaera tokodaii (strain DSM 16993 / JCM 10545 / NBRC 100140 / 7) (Sulfolobus tokodaii), this protein is Glutamine--fructose-6-phosphate aminotransferase [isomerizing].